The following is a 247-amino-acid chain: ABC-type transporter ATP-binding protein EcsA (247 aa).

In terms of domain architecture, ABC transporter spans 4-234 (LSVKDLTGGY…FGMKDAALDD (231 aa)). An ATP-binding site is contributed by 36-43 (GLNGAGKS).

It belongs to the ABC transporter superfamily.

Functionally, has a role in exoprotein production, sporulation and competence. This chain is ABC-type transporter ATP-binding protein EcsA (ecsA), found in Bacillus subtilis (strain 168).